The sequence spans 504 residues: Transcription factor NDT80 (504 aa).

Disordered stretches follow at residues 64-172 (MHFN…QHHM), 283-310 (NGFPPHHPSHPQNQPQNHPGHPHHNQHA), and 477-504 (RGRSPSSYHKDRTSGYRATNTPTPTPPQ). Composition is skewed to low complexity over residues 73–87 (QQQQQQQQQQQQQQQ), 103–145 (QGPT…ARQP), 153–172 (QQAQNQDQADAQSQAQQHHM), and 292–301 (HPQNQPQNHP). The NDT80 DNA-binding region spans 160-488 (QADAQSQAQQ…RSPSSYHKDR (329 aa)).

The protein localises to the nucleus. In terms of biological role, meiosis-specific transcription factor that binds to the middle sporulation element (MSE) of targeted genes corresponding to the consensus sequence 5'-ACACAAA-3'. Acts as an activator of CDR1 induction by antifungal drugs. Modulates azole sensitivity by controlling the expression of ergosterol biosynthesis genes. Required for hyphal growth in response to different filament-inducing cues and for the proper expression of genes characterizing the filamentous transcriptional program including noteworthy genes encoding cell wall components, such as HWP1, ECE1, RBT4, and ALS3. Is essential for the completion of cell separation through the direct transcriptional regulation of genes encoding the chitinase CHT3 and the cell wall glucosidase SUN41. Required for biofilm formation and plays a key role in microcolony formation under both flow and static conditions and to epithelial surfaces. Essential for virulence. This is Transcription factor NDT80 from Candida albicans (strain SC5314 / ATCC MYA-2876) (Yeast).